Consider the following 783-residue polypeptide: Endonuclease MutS2 (783 aa).

328–335 (GPNTGGKT) is a binding site for ATP. One can recognise a Smr domain in the interval 708 to 783 (LDLRGKRYEE…GSGCTIATLG (76 aa)).

Belongs to the DNA mismatch repair MutS family. MutS2 subfamily. As to quaternary structure, homodimer. Binds to stalled ribosomes, contacting rRNA.

Functionally, endonuclease that is involved in the suppression of homologous recombination and thus may have a key role in the control of bacterial genetic diversity. Its function is as follows. Acts as a ribosome collision sensor, splitting the ribosome into its 2 subunits. Detects stalled/collided 70S ribosomes which it binds and splits by an ATP-hydrolysis driven conformational change. Acts upstream of the ribosome quality control system (RQC), a ribosome-associated complex that mediates the extraction of incompletely synthesized nascent chains from stalled ribosomes and their subsequent degradation. Probably generates substrates for RQC. This is Endonuclease MutS2 from Streptococcus thermophilus (strain ATCC BAA-250 / LMG 18311).